The chain runs to 125 residues: Ribosome-binding factor A (125 aa).

It belongs to the RbfA family. In terms of assembly, monomer. Binds 30S ribosomal subunits, but not 50S ribosomal subunits or 70S ribosomes.

The protein resides in the cytoplasm. Functionally, one of several proteins that assist in the late maturation steps of the functional core of the 30S ribosomal subunit. Associates with free 30S ribosomal subunits (but not with 30S subunits that are part of 70S ribosomes or polysomes). Required for efficient processing of 16S rRNA. May interact with the 5'-terminal helix region of 16S rRNA. The sequence is that of Ribosome-binding factor A from Kosmotoga olearia (strain ATCC BAA-1733 / DSM 21960 / TBF 19.5.1).